The sequence spans 744 residues: MTIDDSNRLLMDVDQFDFLDDGTAQLSNNKTDEEEQLYKRDPVSGAILVPMTVNDQPIEKNGDKMPLKFKLGPLSYQNMAFITAKDKYKLYPVRIPRLDTSKEFSAYVSGLFEIYRDLGDDRVFNVPTIGVVNSNFAKEHNATVNLAMEAILNELEVFIGRVKDQDGRVNRFYELEESLTVLNCLRTMYFILDGQDVEENRSEFIESLLNWINRSDGEPDEEYIEQVFSVKDSTAGKKVFETQYFWKLLNQLVLRGLLSQAIGCIERSDLLPYLSDTCAVSFDAVSDSIELLKQYPKDSSSTFREWKNLVLKLSQAFGSSATDISGELRDYIEDFLLVIGGNQRKILQYSRTWYESFCGFLLYYIPSLELSAEYLQMSLEANVVDITNDWEQPCVDIISGKIHSILPVMESLDSCTAAFTAMICEAKGLIENIFEGEKNSDDYSNEDNEMLEDLFSYRNGMASYMLNSFAFELCSLGDKELWPVAIGLIALSATGTRSAKKMVIAELLPHYPFVTNDDIEWMLSICVEWRLPEIAKEIYTTLGNQMLSAHNIIESIANFSRAGKYELVKSYSWLLFEASCMEGQKLDDPVLNAIVSKNSPAEDDVIIPQDILDCVVTNSMRQTLAPYAVLSQFYELRDREDWGQALRLLLLLIEFPYLPKHYLVLLVAKFLYPIFLLDDKKLMDEDSVATVIEVIETKWDDADEKSSNLYETIIEADKSLPSSMATLLKNLRKKLNFKLCQAFM.

The protein belongs to the nucleoporin Nup85 family. In terms of assembly, component of the nuclear pore complex (NPC). NPC constitutes the exclusive means of nucleocytoplasmic transport. NPCs allow the passive diffusion of ions and small molecules and the active, nuclear transport receptor-mediated bidirectional transport of macromolecules such as proteins, RNAs, ribonucleoparticles (RNPs), and ribosomal subunits across the nuclear envelope. Due to its 8-fold rotational symmetry, all subunits are present with 8 copies or multiples thereof. NUP85 is part of the heptameric 0.5 MDa autoassembling NUP84 NPC subcomplex (NUP84, NUP85, NUP120, NUP133, NUP145C, SEC13 and SEH1). NUP85 also interacts directly with the GLFG repeats of NUP116 and directly or indirectly with the mRNA transport factor MTR2.

It is found in the nucleus. It localises to the nuclear pore complex. Its subcellular location is the nucleus membrane. Functions as a component of the nuclear pore complex (NPC). NPC components, collectively referred to as nucleoporins (NUPs), can play the role of both NPC structural components and of docking or interaction partners for transiently associated nuclear transport factors. NUP85 is involved in nuclear poly(A)+ RNA and pre-ribosome export, in GSP1 nuclear import, in NPC assembly and distribution, as well as in nuclear envelope organization. The sequence is that of Nucleoporin NUP85 (NUP85) from Saccharomyces cerevisiae (strain ATCC 204508 / S288c) (Baker's yeast).